Consider the following 60-residue polypeptide: UPF0434 protein YcaR (60 aa).

Belongs to the UPF0434 family.

This Salmonella arizonae (strain ATCC BAA-731 / CDC346-86 / RSK2980) protein is UPF0434 protein YcaR.